The chain runs to 601 residues: Zinc finger CCCH domain-containing protein 33 (601 aa).

ANK repeat units lie at residues 71–101 (ERRTAAMVAALYGSTGVLGYVVAAAPAEAAR) and 106–138 (DGATPLHMAAAGGAANAVAATRLLLAAGASVDA). The span at 167–180 (PAVSPSSSPKKSAS) shows a compositional bias: low complexity. The disordered stretch occupies residues 167 to 203 (PAVSPSSSPKKSASPPSPPPPQEAKKEYPPDLTLPDL). 2 consecutive C3H1-type zinc fingers follow at residues 252–280 (SYSCVPCPEFRKGGSCRKGDACEYAHGVF) and 288–312 (QYRTRLCKDEVGCARRICFFAHKPD).

The chain is Zinc finger CCCH domain-containing protein 33 from Oryza sativa subsp. japonica (Rice).